A 304-amino-acid polypeptide reads, in one-letter code: Quinolinate synthase (304 aa).

The iminosuccinate site is built by histidine 24 and serine 41. [4Fe-4S] cluster is bound at residue cysteine 86. Iminosuccinate-binding positions include 112-114 (YVN) and serine 129. Cysteine 171 is a [4Fe-4S] cluster binding site. Iminosuccinate is bound by residues 197–199 (HPE) and threonine 214. A [4Fe-4S] cluster-binding site is contributed by cysteine 259.

Belongs to the quinolinate synthase family. Type 2 subfamily. The cofactor is [4Fe-4S] cluster.

The protein localises to the cytoplasm. The enzyme catalyses iminosuccinate + dihydroxyacetone phosphate = quinolinate + phosphate + 2 H2O + H(+). The protein operates within cofactor biosynthesis; NAD(+) biosynthesis; quinolinate from iminoaspartate: step 1/1. Catalyzes the condensation of iminoaspartate with dihydroxyacetone phosphate to form quinolinate. This chain is Quinolinate synthase, found in Geobacter sp. (strain M21).